A 1447-amino-acid polypeptide reads, in one-letter code: Gag-Pol polyprotein (1447 aa).

Gly-2 is lipidated: N-myristoyl glycine; by host. Residues 7–31 are interaction with Gp41; sequence VLSGGELDRWEKIRLRPGGKKKYKL. The interval 8 to 43 is interaction with host CALM1; the sequence is LSGGELDRWEKIRLRPGGKKKYKLKHIVWASRELER. Residues 12-19 form an interaction with host AP3D1 region; that stretch reads ELDRWEKI. The interaction with membrane phosphatidylinositol 4,5-bisphosphate and RNA stretch occupies residues 14 to 33; that stretch reads DRWEKIRLRPGGKKKYKLKH. The short motif at 16–22 is the Nuclear export signal element; it reads WEKIRLR. The Nuclear localization signal signature appears at 26-32; the sequence is KKKYKLK. Positions 73 to 77 are interaction with membrane phosphatidylinositol 4,5-bisphosphate; it reads EELRS. The segment at 106–128 is disordered; the sequence is EEQNKSKKKAQQAAADTGHSSQV. Tyr-132 is modified (phosphotyrosine; by host). The interval 189–227 is interaction with human PPIA/CYPA and NUP153; the sequence is NTVGGHQAAMQMLKETINEEAAEWDRVHPVHAGPIAPGQ. Residues 277–363 form a dimerization/Multimerization of capsid protein p24 region; it reads YSPTSILDIR…GGPGHKARVL (87 aa). Residue Arg-387 is modified to Asymmetric dimethylarginine; in Nucleocapsid protein p7; by host PRMT6. The CCHC-type 1 zinc-finger motif lies at 390 to 407; the sequence is VKCFNCGKEGHTARNCRA. Asymmetric dimethylarginine; in Nucleocapsid protein p7; by host PRMT6 is present on Arg-409. Residues 411-428 form a CCHC-type 2 zinc finger; the sequence is KGCWKCGKEGHQMKDCTE. The tract at residues 446–493 is disordered; the sequence is REFSSEQTRANSPTISSEQTRANSPTRRELQVWGRDNNSPSEAGADRQ. The span at 450-470 shows a compositional bias: polar residues; it reads SEQTRANSPTISSEQTRANSP. Residues 501–505 are dimerization of protease; it reads PQITL. One can recognise a Peptidase A2 domain in the interval 520–589; it reads KEALLDTGAD…TPVNIIGRNL (70 aa). The For protease activity; shared with dimeric partner role is filled by Asp-525. 2 dimerization of protease regions span residues 549 to 555 and 588 to 600; these read GIGGFIK and NLLT…LNFP. The region spanning 643–833 is the Reverse transcriptase domain; sequence EGKISKIGPE…PPFLWMGYEL (191 aa). Positions 709, 784, and 785 each coordinate Mg(2+). An RT 'primer grip' region spans residues 826 to 834; that stretch reads FLWMGYELH. The Tryptophan repeat motif motif lies at 997–1013; sequence WETWWTEYWQATWIPEW. The 124-residue stretch at 1033-1156 folds into the RNase H type-1 domain; that stretch reads IVGAETFYVD…VDKLVSAGIR (124 aa). Residues Asp-1042, Glu-1077, Asp-1097, and Asp-1148 each contribute to the Mg(2+) site. The Integrase-type zinc finger occupies 1162–1203; it reads DGIDKAQDEHEKYHSNWRAMASDFNLPPVVAKEIVASCDKCQ. Zn(2+)-binding residues include His-1171, His-1175, Cys-1199, and Cys-1202. Positions 1213–1363 constitute an Integrase catalytic domain; it reads VDCSPGIWQL…SAGERIVDII (151 aa). Asp-1223, Asp-1275, and Glu-1311 together coordinate Mg(2+). Positions 1382-1429 form a DNA-binding region, integrase-type; that stretch reads FRVYYRDSRNPLWKGPAKLLWKGEGAVVIQDNSDIKVVPRRKAKIIRD.

As to quaternary structure, homotrimer; further assembles as hexamers of trimers. Interacts with gp41 (via C-terminus). Interacts with host CALM1; this interaction induces a conformational change in the Matrix protein, triggering exposure of the myristate group. Interacts with host AP3D1; this interaction allows the polyprotein trafficking to multivesicular bodies during virus assembly. Part of the pre-integration complex (PIC) which is composed of viral genome, matrix protein, Vpr and integrase. Homodimer; the homodimer further multimerizes as homohexamers or homopentamers. Interacts with human PPIA/CYPA; This interaction stabilizes the capsid. Interacts with human NUP153. Interacts with host PDZD8; this interaction stabilizes the capsid. Interacts with monkey TRIM5; this interaction destabilizes the capsid. In terms of assembly, homodimer, whose active site consists of two apposed aspartic acid residues. As to quaternary structure, heterodimer of p66 RT and p51 RT (RT p66/p51). Heterodimerization of RT is essential for DNA polymerase activity. The overall folding of the subdomains is similar in p66 RT and p51 RT but the spatial arrangements of the subdomains are dramatically different. Homotetramer; may further associate as a homohexadecamer. Part of the pre-integration complex (PIC) which is composed of viral genome, matrix protein, Vpr and integrase. Interacts with human SMARCB1/INI1 and human PSIP1/LEDGF isoform 1. Interacts with human KPNA3; this interaction might play a role in nuclear import of the pre-integration complex. Interacts with human NUP153; this interaction might play a role in nuclear import of the pre-integration complex. The cofactor is Mg(2+). Post-translationally, specific enzymatic cleavages by the viral protease yield mature proteins. The protease is released by autocatalytic cleavage. The polyprotein is cleaved during and after budding, this process is termed maturation. Proteolytic cleavage of p66 RT removes the RNase H domain to yield the p51 RT subunit. Nucleocapsid protein p7 might be further cleaved after virus entry. Tyrosine phosphorylated presumably in the virion by a host kinase. Phosphorylation is apparently not a major regulator of membrane association. In terms of processing, phosphorylated possibly by host MAPK1; this phosphorylation is necessary for Pin1-mediated virion uncoating. Post-translationally, methylated by host PRMT6, impairing its function by reducing RNA annealing and the initiation of reverse transcription.

It is found in the host cell membrane. It localises to the host endosome. Its subcellular location is the host multivesicular body. The protein localises to the virion membrane. The protein resides in the host nucleus. It is found in the host cytoplasm. It localises to the virion. The catalysed reaction is Specific for a P1 residue that is hydrophobic, and P1' variable, but often Pro.. It carries out the reaction 3'-end directed exonucleolytic cleavage of viral RNA-DNA hybrid.. The enzyme catalyses Endohydrolysis of RNA in RNA/DNA hybrids. Three different cleavage modes: 1. sequence-specific internal cleavage of RNA. Human immunodeficiency virus type 1 and Moloney murine leukemia virus enzymes prefer to cleave the RNA strand one nucleotide away from the RNA-DNA junction. 2. RNA 5'-end directed cleavage 13-19 nucleotides from the RNA end. 3. DNA 3'-end directed cleavage 15-20 nucleotides away from the primer terminus.. It catalyses the reaction DNA(n) + a 2'-deoxyribonucleoside 5'-triphosphate = DNA(n+1) + diphosphate. With respect to regulation, protease: The viral protease is inhibited by many synthetic protease inhibitors (PIs), such as amprenavir, atazanavir, indinavir, loprinavir, nelfinavir, ritonavir and saquinavir. Use of protease inhibitors in tritherapy regimens permit more ambitious therapeutic strategies. Reverse transcriptase/ribonuclease H: RT can be inhibited either by nucleoside RT inhibitors (NRTIs) or by non nucleoside RT inhibitors (NNRTIs). NRTIs act as chain terminators, whereas NNRTIs inhibit DNA polymerization by binding a small hydrophobic pocket near the RT active site and inducing an allosteric change in this region. Classical NRTIs are abacavir, adefovir (PMEA), didanosine (ddI), lamivudine (3TC), stavudine (d4T), tenofovir (PMPA), zalcitabine (ddC), and zidovudine (AZT). Classical NNRTIs are atevirdine (BHAP U-87201E), delavirdine, efavirenz (DMP-266), emivirine (I-EBU), and nevirapine (BI-RG-587). The tritherapies used as a basic effective treatment of AIDS associate two NRTIs and one NNRTI. In terms of biological role, mediates, with Gag polyprotein, the essential events in virion assembly, including binding the plasma membrane, making the protein-protein interactions necessary to create spherical particles, recruiting the viral Env proteins, and packaging the genomic RNA via direct interactions with the RNA packaging sequence (Psi). Gag-Pol polyprotein may regulate its own translation, by the binding genomic RNA in the 5'-UTR. At low concentration, the polyprotein would promote translation, whereas at high concentration, the polyprotein would encapsidate genomic RNA and then shut off translation. Functionally, targets the polyprotein to the plasma membrane via a multipartite membrane-binding signal, that includes its myristoylated N-terminus. Matrix protein is part of the pre-integration complex. Implicated in the release from host cell mediated by Vpu. Binds to RNA. Forms the conical core that encapsulates the genomic RNA-nucleocapsid complex in the virion. Most core are conical, with only 7% tubular. The core is constituted by capsid protein hexamer subunits. The core is disassembled soon after virion entry. Host restriction factors such as TRIM5-alpha or TRIMCyp bind retroviral capsids and cause premature capsid disassembly, leading to blocks in reverse transcription. Capsid restriction by TRIM5 is one of the factors which restricts HIV-1 to the human species. Host PIN1 apparently facilitates the virion uncoating. On the other hand, interactions with PDZD8 or CYPA stabilize the capsid. Its function is as follows. Encapsulates and protects viral dimeric unspliced genomic RNA (gRNA). Binds these RNAs through its zinc fingers. Acts as a nucleic acid chaperone which is involved in rearangement of nucleic acid secondary structure during gRNA retrotranscription. Also facilitates template switch leading to recombination. As part of the polyprotein, participates in gRNA dimerization, packaging, tRNA incorporation and virion assembly. In terms of biological role, aspartyl protease that mediates proteolytic cleavages of Gag and Gag-Pol polyproteins during or shortly after the release of the virion from the plasma membrane. Cleavages take place as an ordered, step-wise cascade to yield mature proteins. This process is called maturation. Displays maximal activity during the budding process just prior to particle release from the cell. Also cleaves Nef and Vif, probably concomitantly with viral structural proteins on maturation of virus particles. Hydrolyzes host EIF4GI and PABP1 in order to shut off the capped cellular mRNA translation. The resulting inhibition of cellular protein synthesis serves to ensure maximal viral gene expression and to evade host immune response. Also mediates cleavage of host YTHDF3. Mediates cleavage of host CARD8, thereby activating the CARD8 inflammasome, leading to the clearance of latent HIV-1 in patient CD4(+) T-cells after viral reactivation; in contrast, HIV-1 can evade CARD8-sensing when its protease remains inactive in infected cells prior to viral budding. Functionally, multifunctional enzyme that converts the viral RNA genome into dsDNA in the cytoplasm, shortly after virus entry into the cell. This enzyme displays a DNA polymerase activity that can copy either DNA or RNA templates, and a ribonuclease H (RNase H) activity that cleaves the RNA strand of RNA-DNA heteroduplexes in a partially processive 3' to 5' endonucleasic mode. Conversion of viral genomic RNA into dsDNA requires many steps. A tRNA(3)-Lys binds to the primer-binding site (PBS) situated at the 5'-end of the viral RNA. RT uses the 3' end of the tRNA primer to perform a short round of RNA-dependent minus-strand DNA synthesis. The reading proceeds through the U5 region and ends after the repeated (R) region which is present at both ends of viral RNA. The portion of the RNA-DNA heteroduplex is digested by the RNase H, resulting in a ssDNA product attached to the tRNA primer. This ssDNA/tRNA hybridizes with the identical R region situated at the 3' end of viral RNA. This template exchange, known as minus-strand DNA strong stop transfer, can be either intra- or intermolecular. RT uses the 3' end of this newly synthesized short ssDNA to perform the RNA-dependent minus-strand DNA synthesis of the whole template. RNase H digests the RNA template except for two polypurine tracts (PPTs) situated at the 5'-end and near the center of the genome. It is not clear if both polymerase and RNase H activities are simultaneous. RNase H probably can proceed both in a polymerase-dependent (RNA cut into small fragments by the same RT performing DNA synthesis) and a polymerase-independent mode (cleavage of remaining RNA fragments by free RTs). Secondly, RT performs DNA-directed plus-strand DNA synthesis using the PPTs that have not been removed by RNase H as primers. PPTs and tRNA primers are then removed by RNase H. The 3' and 5' ssDNA PBS regions hybridize to form a circular dsDNA intermediate. Strand displacement synthesis by RT to the PBS and PPT ends produces a blunt ended, linear dsDNA copy of the viral genome that includes long terminal repeats (LTRs) at both ends. Catalyzes viral DNA integration into the host chromosome, by performing a series of DNA cutting and joining reactions. This enzyme activity takes place after virion entry into a cell and reverse transcription of the RNA genome in dsDNA. The first step in the integration process is 3' processing. This step requires a complex comprising the viral genome, matrix protein, Vpr and integrase. This complex is called the pre-integration complex (PIC). The integrase protein removes 2 nucleotides from each 3' end of the viral DNA, leaving recessed CA OH's at the 3' ends. In the second step, the PIC enters cell nucleus. This process is mediated through integrase and Vpr proteins, and allows the virus to infect a non dividing cell. This ability to enter the nucleus is specific of lentiviruses, other retroviruses cannot and rely on cell division to access cell chromosomes. In the third step, termed strand transfer, the integrase protein joins the previously processed 3' ends to the 5' ends of strands of target cellular DNA at the site of integration. The 5'-ends are produced by integrase-catalyzed staggered cuts, 5 bp apart. A Y-shaped, gapped, recombination intermediate results, with the 5'-ends of the viral DNA strands and the 3' ends of target DNA strands remaining unjoined, flanking a gap of 5 bp. The last step is viral DNA integration into host chromosome. This involves host DNA repair synthesis in which the 5 bp gaps between the unjoined strands are filled in and then ligated. Since this process occurs at both cuts flanking the HIV genome, a 5 bp duplication of host DNA is produced at the ends of HIV-1 integration. Alternatively, Integrase may catalyze the excision of viral DNA just after strand transfer, this is termed disintegration. This Human immunodeficiency virus type 1 group M subtype B (isolate BH10) (HIV-1) protein is Gag-Pol polyprotein (gag-pol).